The following is a 138-amino-acid chain: 16 kDa phloem protein 2 (138 aa).

In terms of domain architecture, C2 spans 1-108 (MGMGMMEVHL…LAEGVRKGWS (108 aa)). Ca(2+) is bound by residues Asp20, Asp27, Asp78, Asp80, and Asp86.

Ca(2+) serves as cofactor. In terms of tissue distribution, sieve elements of leaves, stems, roots and flowers.

Its function is as follows. Binds to both sense and antisense RNA. Interacts with mesophyll plasmodesmata to mediate its own cell-to-cell transport and potentiate RNA trafficking. This chain is 16 kDa phloem protein 2 (PP16-2), found in Cucurbita maxima (Pumpkin).